Consider the following 159-residue polypeptide: Large ribosomal subunit protein uL22 (159 aa).

It belongs to the universal ribosomal protein uL22 family. Part of the 50S ribosomal subunit.

Its function is as follows. This protein binds specifically to 23S rRNA; its binding is stimulated by other ribosomal proteins, e.g. L4, L17, and L20. It is important during the early stages of 50S assembly. It makes multiple contacts with different domains of the 23S rRNA in the assembled 50S subunit and ribosome. Functionally, the globular domain of the protein is located near the polypeptide exit tunnel on the outside of the subunit, while an extended beta-hairpin is found that lines the wall of the exit tunnel in the center of the 70S ribosome. In Thermotoga sp. (strain RQ2), this protein is Large ribosomal subunit protein uL22.